The following is a 393-amino-acid chain: NAD(P)H-quinone oxidoreductase subunit H, chloroplastic (393 aa).

It belongs to the complex I 49 kDa subunit family. NDH is composed of at least 16 different subunits, 5 of which are encoded in the nucleus.

Its subcellular location is the plastid. The protein resides in the chloroplast thylakoid membrane. It carries out the reaction a plastoquinone + NADH + (n+1) H(+)(in) = a plastoquinol + NAD(+) + n H(+)(out). The catalysed reaction is a plastoquinone + NADPH + (n+1) H(+)(in) = a plastoquinol + NADP(+) + n H(+)(out). Functionally, NDH shuttles electrons from NAD(P)H:plastoquinone, via FMN and iron-sulfur (Fe-S) centers, to quinones in the photosynthetic chain and possibly in a chloroplast respiratory chain. The immediate electron acceptor for the enzyme in this species is believed to be plastoquinone. Couples the redox reaction to proton translocation, and thus conserves the redox energy in a proton gradient. The sequence is that of NAD(P)H-quinone oxidoreductase subunit H, chloroplastic from Crucihimalaya wallichii (Rock-cress).